A 1364-amino-acid chain; its full sequence is Serine protease EatA (1364 aa).

Residues 1 to 56 (MNKVFSLKYSFLAKGFIAVSELARRVSVKGKLKSASSIIISPITIAIVSYAPPSLA) form the signal peptide. The region spanning 57–307 (ATVNADISYQ…VVTTQDFLHQ (251 aa)) is the Peptidase S6 domain. Catalysis depends on charge relay system residues H134, D162, and S267. The Autotransporter domain maps to 1098-1364 (DSQGDAGGWA…SINANFRYYF (267 aa)).

Post-translationally, cleaved to release the mature protein from the outer membrane.

The protein resides in the periplasm. It localises to the secreted. The protein localises to the cell surface. It is found in the cell outer membrane. Inhibited by phenylmethylsulfonyl fluoride. Its function is as follows. Autotransporter serine protease probably involved in virulence. This is Serine protease EatA (eatA) from Escherichia coli O78:H11 (strain H10407 / ETEC).